The following is a 259-amino-acid chain: Cytochrome c oxidase subunit 3 (259 aa).

7 helical membrane-spanning segments follow: residues 13 to 33 (PWPL…TSWF), 36 to 56 (HGFI…FQWW), 80 to 100 (GMVL…WAYF), 125 to 145 (FQIP…VTWA), 154 to 174 (HAEA…FTLL), 195 to 215 (FFVA…FLLI), and 237 to 257 (AWYW…IYWW).

This sequence belongs to the cytochrome c oxidase subunit 3 family. In terms of assembly, component of the cytochrome c oxidase (complex IV, CIV), a multisubunit enzyme composed of a catalytic core of 3 subunits and several supernumerary subunits. The complex exists as a monomer or a dimer and forms supercomplexes (SCs) in the inner mitochondrial membrane with ubiquinol-cytochrome c oxidoreductase (cytochrome b-c1 complex, complex III, CIII).

It is found in the mitochondrion inner membrane. The catalysed reaction is 4 Fe(II)-[cytochrome c] + O2 + 8 H(+)(in) = 4 Fe(III)-[cytochrome c] + 2 H2O + 4 H(+)(out). Functionally, component of the cytochrome c oxidase, the last enzyme in the mitochondrial electron transport chain which drives oxidative phosphorylation. The respiratory chain contains 3 multisubunit complexes succinate dehydrogenase (complex II, CII), ubiquinol-cytochrome c oxidoreductase (cytochrome b-c1 complex, complex III, CIII) and cytochrome c oxidase (complex IV, CIV), that cooperate to transfer electrons derived from NADH and succinate to molecular oxygen, creating an electrochemical gradient over the inner membrane that drives transmembrane transport and the ATP synthase. Cytochrome c oxidase is the component of the respiratory chain that catalyzes the reduction of oxygen to water. Electrons originating from reduced cytochrome c in the intermembrane space (IMS) are transferred via the dinuclear copper A center (CU(A)) of subunit 2 and heme A of subunit 1 to the active site in subunit 1, a binuclear center (BNC) formed by heme A3 and copper B (CU(B)). The BNC reduces molecular oxygen to 2 water molecules using 4 electrons from cytochrome c in the IMS and 4 protons from the mitochondrial matrix. The protein is Cytochrome c oxidase subunit 3 (COIII) of Heterololigo bleekeri (Spear squid).